The primary structure comprises 402 residues: Fugralins biosynthesis cluster protein 2 (402 aa).

The next 5 membrane-spanning stretches (helical) occupy residues N28 to L48, I109 to V129, I145 to V165, V232 to V252, and L264 to V284. Disordered regions lie at residues N312–K335 and T378–V402. The span at T324–P334 shows a compositional bias: polar residues. The N-linked (GlcNAc...) asparagine glycan is linked to N381.

Belongs to the SAT4 family.

The protein localises to the membrane. Its pathway is secondary metabolite biosynthesis. Its function is as follows. Part of the gene cluster that mediates the biosynthesis of the tetraketides fugralins such as linear fugralin A and cyclic fugralin B, volatile compounds that play a role in the asexual reproductive cycle but are not involved in pathogenicity. One of the key features of fugralins is the presence of a double methyl group, which is only rarely encountered in fungal secondary metabolites. As the fugralins cluster does not contain an independent methyltransferase, the PKS FGR1 is probably responsible for adding two methyl groups to the same carbon atom. Fugralin B is similar to fugralin A except for a cyclization between the carboxylic acid C-8 and the alcohol on C-4 resulting in a six membered lactone ring, probably catalyzed by the cyclase FGR4. The exact role of the individual cluster genes remains unknown and further work is needed to unravel the biosynthetic pathway. This chain is Fugralins biosynthesis cluster protein 2, found in Gibberella zeae (strain ATCC MYA-4620 / CBS 123657 / FGSC 9075 / NRRL 31084 / PH-1) (Wheat head blight fungus).